The primary structure comprises 144 residues: Large ribosomal subunit protein uL15 (144 aa).

Residues 1-52 (MRLNTISSAPGAKQAEKRVGRGIGSGWGKTCGRGHKGQKSRSGGFHKVGFEG) form a disordered region. Over residues 21–31 (RGIGSGWGKTC) the composition is skewed to gly residues.

The protein belongs to the universal ribosomal protein uL15 family. As to quaternary structure, part of the 50S ribosomal subunit.

In terms of biological role, binds to the 23S rRNA. This Nitrosococcus oceani (strain ATCC 19707 / BCRC 17464 / JCM 30415 / NCIMB 11848 / C-107) protein is Large ribosomal subunit protein uL15.